Reading from the N-terminus, the 200-residue chain is Small ribosomal subunit protein uS4 (200 aa).

Residues Ser-92–Val-155 form the S4 RNA-binding domain.

The protein belongs to the universal ribosomal protein uS4 family. Part of the 30S ribosomal subunit. Contacts protein S5. The interaction surface between S4 and S5 is involved in control of translational fidelity.

Functionally, one of the primary rRNA binding proteins, it binds directly to 16S rRNA where it nucleates assembly of the body of the 30S subunit. Its function is as follows. With S5 and S12 plays an important role in translational accuracy. This chain is Small ribosomal subunit protein uS4, found in Staphylococcus haemolyticus (strain JCSC1435).